A 336-amino-acid chain; its full sequence is L-rhamnono-gamma-lactonase (336 aa).

It belongs to the metallo-dependent hydrolases superfamily. Requires a divalent metal cation as cofactor.

The enzyme catalyses L-rhamnono-1,4-lactone + H2O = L-rhamnonate + H(+). Inhibited by Zn(2+), Fe(2+) and Cu(2+), but not by EDTA. Its function is as follows. Hydrolase with high substrate specificity for L-rhamnono-1,4-lactone. Catalyzes the second step in an alternative pathway for rhamnose utilization that does not involve phosphorylated intermediates. This Scheffersomyces stipitis (strain ATCC 58785 / CBS 6054 / NBRC 10063 / NRRL Y-11545) (Yeast) protein is L-rhamnono-gamma-lactonase (LRA2).